A 168-amino-acid polypeptide reads, in one-letter code: Gremlin-2 (168 aa).

Residues 1–21 (MFWKLSLSLFLVAVLVKVAEA) form the signal peptide. N-linked (GlcNAc...) asparagine glycosylation occurs at asparagine 40. 4 cysteine pairs are disulfide-bonded: cysteine 73-cysteine 123, cysteine 87-cysteine 137, cysteine 97-cysteine 155, and cysteine 101-cysteine 157. In terms of domain architecture, CTCK spans 73–163 (CKTQPLRQTV…QCRCMSVNLS (91 aa)). An N-linked (GlcNAc...) asparagine glycan is attached at asparagine 161.

The protein belongs to the DAN family. In terms of assembly, homodimer. Interacts with BMP2, BMP4 and BMP7, but has lower affinity for BMP7 than for BMP2 and BMP4. Binds heparin; this impairs the interaction with BMP2. In terms of processing, N-glycosylated.

The protein localises to the secreted. In terms of biological role, cytokine that inhibits the activity of BMP2 and BMP4 in a dose-dependent manner, and thereby modulates signaling by BMP family members. Contributes to the regulation of embryonic morphogenesis via BMP family members. Antagonizes BMP4-induced suppression of progesterone production in granulosa cells. The chain is Gremlin-2 (GREM2) from Homo sapiens (Human).